The sequence spans 382 residues: Alkanesulfonate monooxygenase (382 aa).

Belongs to the SsuD family. Homotetramer.

The catalysed reaction is an alkanesulfonate + FMNH2 + O2 = an aldehyde + FMN + sulfite + H2O + 2 H(+). Functionally, catalyzes the desulfonation of aliphatic sulfonates. In Yersinia pseudotuberculosis serotype O:1b (strain IP 31758), this protein is Alkanesulfonate monooxygenase.